Reading from the N-terminus, the 269-residue chain is MPELPEVETSRRGIEPHLVGATILHAHIRNGRLRWPVSDEIYRLSDTPVLSVQRRAKYLLLELPDGWIIIHLGMSGSLRILPEALPAEKHDHVDLVMSNGKILRYTDPRRFGAWLWTKELEGHNVLAHLGPEPLSDEFNGEYLQQKCAKKKTAIKPWLMDNKLVVGVGNIYASESLFAAGIHPDRLASSLSTEECDLLARVIKAVLLRSIEQGGTTLKDFLQSDGKPGYFAQELQVYGRKGEPCRVCGTPIVATKHAQRATFYCRHCQK.

Pro2 acts as the Schiff-base intermediate with DNA in catalysis. Glu3 functions as the Proton donor in the catalytic mechanism. The active-site Proton donor; for beta-elimination activity is the Lys57. DNA is bound by residues His90, Arg109, and Lys150. An FPG-type zinc finger spans residues 235-269; it reads QVYGRKGEPCRVCGTPIVATKHAQRATFYCRHCQK. The active-site Proton donor; for delta-elimination activity is Arg259.

Belongs to the FPG family. As to quaternary structure, monomer. It depends on Zn(2+) as a cofactor.

The enzyme catalyses Hydrolysis of DNA containing ring-opened 7-methylguanine residues, releasing 2,6-diamino-4-hydroxy-5-(N-methyl)formamidopyrimidine.. The catalysed reaction is 2'-deoxyribonucleotide-(2'-deoxyribose 5'-phosphate)-2'-deoxyribonucleotide-DNA = a 3'-end 2'-deoxyribonucleotide-(2,3-dehydro-2,3-deoxyribose 5'-phosphate)-DNA + a 5'-end 5'-phospho-2'-deoxyribonucleoside-DNA + H(+). Involved in base excision repair of DNA damaged by oxidation or by mutagenic agents. Acts as a DNA glycosylase that recognizes and removes damaged bases. Has a preference for oxidized purines, such as 7,8-dihydro-8-oxoguanine (8-oxoG). Has AP (apurinic/apyrimidinic) lyase activity and introduces nicks in the DNA strand. Cleaves the DNA backbone by beta-delta elimination to generate a single-strand break at the site of the removed base with both 3'- and 5'-phosphates. In Salmonella heidelberg (strain SL476), this protein is Formamidopyrimidine-DNA glycosylase.